The primary structure comprises 205 residues: NADH-ubiquinone oxidoreductase chain 6 (205 aa).

3 helical membrane passes run 48-68 (FFAMIFLVVYIGAIAVLFLFV), 86-106 (YLPVSGIIGLIFWWEMFFILD), and 150-170 (VWFLVSSLILLVAMIGAIVLT).

Belongs to the complex I subunit 6 family. In terms of assembly, complex I is composed of at least 49 different subunits.

The protein resides in the mitochondrion membrane. It carries out the reaction a ubiquinone + NADH + 5 H(+)(in) = a ubiquinol + NAD(+) + 4 H(+)(out). Its function is as follows. Core subunit of the mitochondrial membrane respiratory chain NADH dehydrogenase (Complex I) that is believed to belong to the minimal assembly required for catalysis. Complex I functions in the transfer of electrons from NADH to the respiratory chain. The immediate electron acceptor for the enzyme is believed to be ubiquinone. This chain is NADH-ubiquinone oxidoreductase chain 6 (ND6), found in Arabidopsis thaliana (Mouse-ear cress).